The chain runs to 218 residues: Ras-related protein R-Ras (218 aa).

Positions M1 to H30 are disordered. A compositionally biased stretch (gly residues) spans S7–G20. Position 36-44 (G36–A44) interacts with GTP. The Effector region motif lies at Y58–Y66. GTP-binding positions include D83–Q87, N142–D145, and S172–K174. C215 carries the cysteine methyl ester modification. Residue C215 is the site of S-geranylgeranyl cysteine attachment. The propeptide at V216 to L218 is removed in mature form.

It belongs to the small GTPase superfamily. Ras family. As to quaternary structure, interacts with PLCE1. Interacts (active GTP-bound form preferentially) with RGS14. Interacts with OSBPL3. Interacts with ZDHHC19. S-palmitoylated by ZDHHC19, leading to increased association with membranes and with rafts/caveolae as well as enhanced cell viability.

The protein localises to the cell membrane. It catalyses the reaction GTP + H2O = GDP + phosphate + H(+). GTP-binding protein with GTPase activity, likely involved in the regulation of MAPK signaling pathway and thereby controlling multiple cellular processes. Regulates the organization of the actin cytoskeleton. With OSPBL3, modulates integrin beta-1 (ITGB1) activity. The sequence is that of Ras-related protein R-Ras (Rras) from Rattus norvegicus (Rat).